Reading from the N-terminus, the 112-residue chain is Small capsomere-interacting protein (112 aa).

This sequence belongs to the herpesviridae small capsomere-interacting protein family. Interacts with the major capsid protein/MCP. Interacts with host TSPAN7; this interaction may be responsible for the presence of TSPAN7 in extracellular virions. Interacts with host MAPRE3 and DYNLT1; these interactions mediate retrograde transport of viral capsids.

It localises to the virion. The protein resides in the host nucleus. Functionally, participates in the assembly of the infectious particles by decorating the outer surface of the capsid shell and thus forming a layer between the capsid and the tegument. Complexes composed of the major capsid protein and small capsomere-interacting protein/SCP assemble together in the host cytoplasm and are translocated to the nucleus, where they accumulate and participate in capsid assembly. Interaction with host dynein light chains suggests a possible function in the retrogarde transport of incoming viral capsids. The chain is Small capsomere-interacting protein from Human herpesvirus 1 (strain 17) (HHV-1).